The chain runs to 300 residues: Ribosomal RNA small subunit methyltransferase H (300 aa).

S-adenosyl-L-methionine-binding positions include 38–40 (GGH), E55, I85, D102, and H109.

The protein belongs to the methyltransferase superfamily. RsmH family.

It localises to the cytoplasm. The enzyme catalyses cytidine(1402) in 16S rRNA + S-adenosyl-L-methionine = N(4)-methylcytidine(1402) in 16S rRNA + S-adenosyl-L-homocysteine + H(+). Specifically methylates the N4 position of cytidine in position 1402 (C1402) of 16S rRNA. This is Ribosomal RNA small subunit methyltransferase H from Brachyspira hyodysenteriae (strain ATCC 49526 / WA1).